The chain runs to 446 residues: MEKDKHSHFYNQKSDFRIEHSMLEELENKLINSRKTERAKIQQQLAKIHNNVKKLQHQLKDVKPTPDFVEKLREMMEEIENAINTFKEEQRLIYEELIKEEKTTNNELSAISRKIDTWALGNSETEKAFRAISSKVPVDKVTPSTLPEEVLDFEKFLQQTGGRQGGWDDYDHQNFVKVRNKHKGKPTFMEEVLEHLPGKTQDEVQQHEKWYQKFLALEERKKESIQSWKTKKQQKREEIFKLNEKANNTPMLFHNKPEDNQKQKEEQRKKQKLAVEAWKKQKSIEMSMKYASHLKEEEEKEKKRQKERQRQFKLKLLLESYTQQKKEQEEFLRLEKEKREKAEKAEKRKTAADGISRFQERDLHKLELKILDRQAKEDEKAQKQRRLAKLKEKVENNVSRDPSRLYKPTKGWEERTKKIGPTGSGPLLHIPHRAIPTWRQGIQRRV.

Coiled-coil stretches lie at residues 23–116 (LEEL…RKID) and 219–400 (ERKK…NVSR). 2 disordered regions span residues 247–277 (NNTPMLFHNKPEDNQKQKEEQRKKQKLAVEA) and 394–430 (VENNVSRDPSRLYKPTKGWEERTKKIGPTGSGPLLHI). Basic and acidic residues predominate over residues 255 to 268 (NKPEDNQKQKEEQR).

It is found in the cytoplasm. Its subcellular location is the cytoskeleton. It localises to the microtubule organizing center. The protein resides in the centrosome. The protein localises to the centriolar satellite. In Macaca fascicularis (Crab-eating macaque), this protein is Coiled-coil domain-containing protein 112 (CCDC112).